The primary structure comprises 176 residues: Shikimate kinase (176 aa).

12–17 (GSGKST) is a binding site for ATP. Residue serine 16 participates in Mg(2+) binding. The substrate site is built by aspartate 34, arginine 58, and glycine 80. Arginine 117 lines the ATP pocket. A substrate-binding site is contributed by arginine 136. Residue arginine 153 coordinates ATP.

It belongs to the shikimate kinase family. Monomer. It depends on Mg(2+) as a cofactor.

The protein localises to the cytoplasm. The catalysed reaction is shikimate + ATP = 3-phosphoshikimate + ADP + H(+). It functions in the pathway metabolic intermediate biosynthesis; chorismate biosynthesis; chorismate from D-erythrose 4-phosphate and phosphoenolpyruvate: step 5/7. Catalyzes the specific phosphorylation of the 3-hydroxyl group of shikimic acid using ATP as a cosubstrate. This is Shikimate kinase from Mycobacterium avium (strain 104).